Reading from the N-terminus, the 140-residue chain is Putative pre-16S rRNA nuclease (140 aa).

The protein belongs to the YqgF nuclease family.

It localises to the cytoplasm. Its function is as follows. Could be a nuclease involved in processing of the 5'-end of pre-16S rRNA. In Lachnospira eligens (strain ATCC 27750 / DSM 3376 / VPI C15-48 / C15-B4) (Eubacterium eligens), this protein is Putative pre-16S rRNA nuclease.